The following is a 606-amino-acid chain: Probable translation initiation factor IF-2 (606 aa).

Positions 11–230 constitute a tr-type G domain; that stretch reads IRQPIVVVLG…LTGLVQRFMK (220 aa). Positions 20-27 are G1; that stretch reads GHVDHGKT. 20–27 serves as a coordination point for GTP; it reads GHVDHGKT. Residues 45 to 49 are G2; sequence EITQH. Residues 85 to 88 form a G3 region; sequence DTPG. GTP is bound by residues 85-89 and 139-142; these read DTPGH and NKID. A G4 region spans residues 139-142; sequence NKID. Residues 207–209 form a G5 region; that stretch reads SAK.

The protein belongs to the TRAFAC class translation factor GTPase superfamily. Classic translation factor GTPase family. IF-2 subfamily.

In terms of biological role, function in general translation initiation by promoting the binding of the formylmethionine-tRNA to ribosomes. Seems to function along with eIF-2. The sequence is that of Probable translation initiation factor IF-2 from Staphylothermus marinus (strain ATCC 43588 / DSM 3639 / JCM 9404 / F1).